The chain runs to 287 residues: Glycine--tRNA ligase alpha subunit (287 aa).

This sequence belongs to the class-II aminoacyl-tRNA synthetase family. In terms of assembly, tetramer of two alpha and two beta subunits.

Its subcellular location is the cytoplasm. The enzyme catalyses tRNA(Gly) + glycine + ATP = glycyl-tRNA(Gly) + AMP + diphosphate. The chain is Glycine--tRNA ligase alpha subunit from Campylobacter jejuni subsp. doylei (strain ATCC BAA-1458 / RM4099 / 269.97).